Consider the following 145-residue polypeptide: uncharacterized protein (145 aa).

This is an uncharacterized protein from Bacillus anthracis.